A 941-amino-acid polypeptide reads, in one-letter code: Bifunctional uridylyltransferase/uridylyl-removing enzyme (941 aa).

A uridylyltransferase region spans residues 1 to 372 (MAKHDLSDAT…RFAHRPRRIP (372 aa)). Residues 373–728 (GTPEFIEDRG…VRTHSFHAIT (356 aa)) are uridylyl-removing. One can recognise an HD domain in the interval 489-611 (VDEHLIRSVG…VQSLDRLRML (123 aa)). ACT domains follow at residues 729–810 (EITV…EVIA) and 840–919 (VIEI…LREQ). Positions 916 to 941 (LREQMPSGIIAPAATKSPAAEKKARV) are disordered.

This sequence belongs to the GlnD family. Mg(2+) serves as cofactor.

The enzyme catalyses [protein-PII]-L-tyrosine + UTP = [protein-PII]-uridylyl-L-tyrosine + diphosphate. It carries out the reaction [protein-PII]-uridylyl-L-tyrosine + H2O = [protein-PII]-L-tyrosine + UMP + H(+). Uridylyltransferase (UTase) activity is inhibited by glutamine, while glutamine activates uridylyl-removing (UR) activity. Functionally, modifies, by uridylylation and deuridylylation, the PII regulatory proteins (GlnB and homologs), in response to the nitrogen status of the cell that GlnD senses through the glutamine level. Under low glutamine levels, catalyzes the conversion of the PII proteins and UTP to PII-UMP and PPi, while under higher glutamine levels, GlnD hydrolyzes PII-UMP to PII and UMP (deuridylylation). Thus, controls uridylylation state and activity of the PII proteins, and plays an important role in the regulation of nitrogen assimilation and metabolism. In Allorhizobium ampelinum (strain ATCC BAA-846 / DSM 112012 / S4) (Agrobacterium vitis (strain S4)), this protein is Bifunctional uridylyltransferase/uridylyl-removing enzyme.